Here is a 504-residue protein sequence, read N- to C-terminus: Glycerol kinase (504 aa).

Thr12 is a binding site for ADP. Thr12, Thr13, and Ser14 together coordinate ATP. Thr12 contributes to the sn-glycerol 3-phosphate binding site. Arg16 is an ADP binding site. 4 residues coordinate sn-glycerol 3-phosphate: Arg82, Glu83, Tyr134, and Asp246. Residues Arg82, Glu83, Tyr134, Asp246, and Gln247 each coordinate glycerol. The ADP site is built by Thr268 and Gly312. 4 residues coordinate ATP: Thr268, Gly312, Gln316, and Gly413. The ADP site is built by Gly413 and Asn417.

The protein belongs to the FGGY kinase family.

The catalysed reaction is glycerol + ATP = sn-glycerol 3-phosphate + ADP + H(+). The protein operates within polyol metabolism; glycerol degradation via glycerol kinase pathway; sn-glycerol 3-phosphate from glycerol: step 1/1. Its activity is regulated as follows. Inhibited by fructose 1,6-bisphosphate (FBP). Key enzyme in the regulation of glycerol uptake and metabolism. Catalyzes the phosphorylation of glycerol to yield sn-glycerol 3-phosphate. This chain is Glycerol kinase, found in Pseudarthrobacter chlorophenolicus (strain ATCC 700700 / DSM 12829 / CIP 107037 / JCM 12360 / KCTC 9906 / NCIMB 13794 / A6) (Arthrobacter chlorophenolicus).